A 216-amino-acid polypeptide reads, in one-letter code: MPKKFQGENSKSATARARKAEAKAVADARKQKELEDALWEDNDKRVVKKEQRKDDKERKRLEALERKRENQRLLEEEDSKIKGKQTKEGPSKVTRAQIEETLQSKQNVKEIKEKEKSHLDVPLEENVNRIVPEEGTVEARTIEDAIAVLSTKEDLDRHPERRMKAAYTAFEEANMPRVKMENPNMRLSQLKQQLKKEWTKSPENPLNQRAASYNTK.

2 disordered regions span residues methionine 1–valine 93 and leucine 194–lysine 216. Residues arginine 18 to proline 90 show a composition bias toward basic and acidic residues. Positions arginine 18–leucine 119 form a coiled coil. Over residues serine 201–lysine 216 the composition is skewed to polar residues.

Belongs to the CCDC124 family. As to quaternary structure, associates with translationally inactive ribosomes in the nonrotated state.

It is found in the cytoplasm. The protein resides in the cytoskeleton. It localises to the microtubule organizing center. The protein localises to the centrosome. Its subcellular location is the midbody. Ribosome-binding protein involved in ribosome hibernation: associates with translationally inactive ribosomes and stabilizes the nonrotated conformation of the 80S ribosome, thereby promoting ribosome preservation and storage. This chain is Coiled-coil domain-containing protein 124 (ccdc124), found in Danio rerio (Zebrafish).